Here is a 442-residue protein sequence, read N- to C-terminus: Cytochrome c biogenesis protein CcsB (442 aa).

3 helical membrane passes run 17–37 (LRLA…GTVI), 76–96 (TPWY…CTLT), and 162–182 (LGPI…ILGA).

This sequence belongs to the Ccs1/CcsB family. May interact with CcsA.

It is found in the cellular thylakoid membrane. Required during biogenesis of c-type cytochromes (cytochrome c6 and cytochrome f) at the step of heme attachment. The polypeptide is Cytochrome c biogenesis protein CcsB (Thermosynechococcus vestitus (strain NIES-2133 / IAM M-273 / BP-1)).